A 1008-amino-acid polypeptide reads, in one-letter code: Pre-mRNA-splicing factor SNU114 (1008 aa).

Ser85 carries the phosphoserine modification. Phosphothreonine is present on Thr88. The tr-type G domain maps to 131 to 338 (ERIINVGVIG…SYYYAHSIPS (208 aa)). Residues 140–147 (GPLHSGKT) form a G1 region. 140-147 (GPLHSGKT) is a GTP binding site. The G2 stretch occupies residues 188–192 (GLSIK). Positions 214-217 (DAPG) are G3. Residues 214–218 (DAPGH) and 268–271 (NKLD) each bind GTP. The G4 stretch occupies residues 268–271 (NKLD). The tract at residues 315-317 (STK) is G5. Positions 504-536 (TSQSESRQKRQLHDISKTETSNEDEDEDDETPS) are disordered. Residues 509-520 (SRQKRQLHDISK) are compositionally biased toward basic and acidic residues. Acidic residues predominate over residues 524–536 (SNEDEDEDDETPS).

The protein belongs to the TRAFAC class translation factor GTPase superfamily. Classic translation factor GTPase family. EF-G/EF-2 subfamily. In terms of assembly, belongs to the CWC complex (or CEF1-associated complex), a spliceosome sub-complex reminiscent of a late-stage spliceosome composed of the U2, U5 and U6 snRNAs and at least BUD13, BUD31, BRR2, CDC40, CEF1, CLF1, CUS1, CWC2, CWC15, CWC21, CWC22, CWC23, CWC24, CWC25, CWC27, ECM2, HSH155, IST3, ISY1, LEA1, MSL1, NTC20, PRP8, PRP9, PRP11, PRP19, PRP21, PRP22, PRP45, PRP46, SLU7, SMB1, SMD1, SMD2, SMD3, SMX2, SMX3, SNT309, SNU114, SPP2, SYF1, SYF2, RSE1 and YJU2. Component of the U4/U6-U5 tri-snRNP complex composed of the U4, U6 and U5 snRNAs and at least PRP3, PRP4, PRP6, PRP8, PRP18, PRP31, PRP38, SNU13, SNU23, SNU66, SNU114, SPP381, SMB1, SMD1, SMD2, SMD3, SMX2, SMX3, LSM2, LSM3, LSM4, LSM5, LSM6, LSM7, LSM8, BRR2 and DIB1. Interacts (via C-terminus) with CWC21. Interacts (via N-terminus) with PRP8 (via SCwid domain).

It localises to the nucleus. Its function is as follows. Component of the U5 snRNP complex required for pre-mRNA splicing. Binds GTP. The sequence is that of Pre-mRNA-splicing factor SNU114 (SNU114) from Saccharomyces cerevisiae (strain ATCC 204508 / S288c) (Baker's yeast).